Here is a 156-residue protein sequence, read N- to C-terminus: Small ribosomal subunit protein uS7 (156 aa).

The protein belongs to the universal ribosomal protein uS7 family. As to quaternary structure, part of the 30S ribosomal subunit. Contacts proteins S9 and S11.

Functionally, one of the primary rRNA binding proteins, it binds directly to 16S rRNA where it nucleates assembly of the head domain of the 30S subunit. Is located at the subunit interface close to the decoding center, probably blocks exit of the E-site tRNA. This chain is Small ribosomal subunit protein uS7, found in Pediococcus pentosaceus (strain ATCC 25745 / CCUG 21536 / LMG 10740 / 183-1w).